We begin with the raw amino-acid sequence, 1479 residues long: ESX secretion system protein EccC (1479 aa).

Over 1–235 the chain is Cytoplasmic; the sequence is MSQLWVLYET…SQEGDGDPRG (235 aa). Residues 236 to 256 traverse the membrane as a helical segment; that stretch reads LWLMVLPPVMMLLVIGAVALI. Topologically, residues 257-259 are extracellular; the sequence is QPR. A helical membrane pass occupies residues 260 to 280; sequence GVFIMISIAMFATTIVTSTAQ. The Cytoplasmic portion of the chain corresponds to 281–1479; the sequence is YMREKKARQM…DQKIQIPKVE (1199 aa). A coiled-coil region spans residues 291–321; it reads RKEKRRRIYTNYLEQKREELQALSEKQRNVL. FtsK domains are found at residues 652 to 848 and 984 to 1168; these read NDVV…NDSK and QSDY…SEKF. Residue 672–679 participates in ATP binding; that stretch reads GTTGSGKS. Glutamate 785 is an active-site residue. ATP-binding positions include 1004-1009, asparagine 1036, aspartate 1105, isoleucine 1197, aspartate 1206, 1287-1291, and isoleucine 1475; these read GYGKST and RKGKT. Residues 1267–1444 form the FtsK 3 domain; it reads VRPVAINMRT…ILVTKKSEQS (178 aa).

As to quaternary structure, whole protein oligomerizes in native gels. Part of the ESX / type VII secretion system (T7SS), which is composed of cytosolic and membrane components. The ESX membrane complex is composed of EccB, EccC and EccD.

It is found in the cell membrane. EsxB binding to the third FtsK domain causes multimerization; a subsequent unknown step relieves the allosteric inhibition of linker 2 on FtsK domain 1, activating the ATPase activity. In terms of biological role, part of the ESX specialized secretion system, which exports proteins from the cell including EsxA (ESAT-6) and EsxB (CFP-10). Might be the translocase subunit. Probably only the first FtsK domain can hydrolyze ATP. This Geobacillus thermodenitrificans (strain NG80-2) protein is ESX secretion system protein EccC.